Consider the following 192-residue polypeptide: ATP-dependent Clp protease proteolytic subunit 1 (192 aa).

S92 acts as the Nucleophile in catalysis. H117 is a catalytic residue.

The protein belongs to the peptidase S14 family. As to quaternary structure, fourteen ClpP subunits assemble into 2 heptameric rings which stack back to back to give a disk-like structure with a central cavity, resembling the structure of eukaryotic proteasomes.

Its subcellular location is the cytoplasm. The catalysed reaction is Hydrolysis of proteins to small peptides in the presence of ATP and magnesium. alpha-casein is the usual test substrate. In the absence of ATP, only oligopeptides shorter than five residues are hydrolyzed (such as succinyl-Leu-Tyr-|-NHMec, and Leu-Tyr-Leu-|-Tyr-Trp, in which cleavage of the -Tyr-|-Leu- and -Tyr-|-Trp bonds also occurs).. In terms of biological role, cleaves peptides in various proteins in a process that requires ATP hydrolysis. Has a chymotrypsin-like activity. Plays a major role in the degradation of misfolded proteins. The polypeptide is ATP-dependent Clp protease proteolytic subunit 1 (Chlamydia muridarum (strain MoPn / Nigg)).